Here is a 123-residue protein sequence, read N- to C-terminus: MVWSELLEILAYSVDCSVNGDLYTNTSGEISTADILRFAEIVEYPSATLLTQNVRQTTPHNKQCTLLLKPFYSPCENNKRKKKSEGERVRSPRTFRGSESLSIQQLEVYRTTMVERRVSFTAQ.

Residues 76–97 (ENNKRKKKSEGERVRSPRTFRG) are disordered.

This is an uncharacterized protein from Saccharomyces cerevisiae (strain ATCC 204508 / S288c) (Baker's yeast).